The chain runs to 257 residues: Triosephosphate isomerase (257 aa).

Positions 11 and 13 each coordinate substrate. The Electrophile role is filled by histidine 96. The active-site Proton acceptor is glutamate 170.

It belongs to the triosephosphate isomerase family. As to quaternary structure, homodimer.

It carries out the reaction D-glyceraldehyde 3-phosphate = dihydroxyacetone phosphate. The protein operates within carbohydrate biosynthesis; gluconeogenesis. Its pathway is carbohydrate degradation; glycolysis; D-glyceraldehyde 3-phosphate from glycerone phosphate: step 1/1. The sequence is that of Triosephosphate isomerase from Giardia intestinalis (Giardia lamblia).